The sequence spans 365 residues: G-protein coupled receptor 4 (365 aa).

Residues 1–10 (MDNSTGTWEG) are Extracellular-facing. Asn3 is a glycosylation site (N-linked (GlcNAc...) asparagine). A helical transmembrane segment spans residues 11–47 (CHVDSRVDHLFPPSLYIFVIGVGLPTNCLALWAAYRQ). 2 disulfides stabilise this stretch: Cys11–Cys260 and Cys92–Cys170. At 48–51 (VRQR) the chain is on the cytoplasmic side. A helical transmembrane segment spans residues 52–82 (NELGVYLMNLSIADLLYICTLPLWVDYFLHH). The Extracellular portion of the chain corresponds to 83-87 (DNWIH). The chain crosses the membrane as a helical span at residues 88–123 (GPGSCKLFGFIFYSNIYISIAFLCCISVDRYLAVAH). Residues 124–131 (PLRFARLR) are Cytoplasmic-facing. A helical transmembrane segment spans residues 132–158 (RVKTAVAVSSVVWATELGANSAPLFHD). The Extracellular portion of the chain corresponds to 159–174 (ELFRDRYNHTFCFEKF). Positions 159-174 (ELFRDRYNHTFCFEKF) are extracellular loop 2 (ECL2). Asn166 carries an N-linked (GlcNAc...) asparagine glycan. Residues 175–212 (PMERWVAWMNLYRVFVGFLFPWALMLLCYRGILRAVQS) traverse the membrane as a helical segment. Residues 213-216 (SVST) lie on the Cytoplasmic side of the membrane. Residues 217–252 (ERQEKVKIKRLALSLIAIVLVCFAPYHALLLSRSAV) form a helical membrane-spanning segment. Residues 253–262 (YLGRPWDCGF) lie on the Extracellular side of the membrane. The chain crosses the membrane as a helical span at residues 263 to 291 (EERVFSAYHSSLAFTSLNCVADPILYCLV). The Cytoplasmic segment spans residues 292–365 (NEGARSDVAK…PLKVLLPPAQ (74 aa)).

It belongs to the G-protein coupled receptor 1 family.

Its subcellular location is the cell membrane. With respect to regulation, activated by a network of residues that connects an extracellular-facing cavity to Glu-147, a conserved charged residue buried in the transmembrane core of the receptor. Protonation likely drives conformational changes in extracellular loop 2 (ECL2), which stabilizes movement of transmembrane 3 (TM3) and a series of rearrangements that connect the extracellular-facing cavity to Glu-147, a residue only conserved in proton-sensing G-protein coupled receptors. Functionally, proton-sensing G-protein coupled receptor activated by extracellular pH, which is required to monitor pH changes and generate adaptive reactions. Activated by an optimal pH of 6.8-7.2. Ligand binding causes a conformation change that triggers signaling via guanine nucleotide-binding proteins (G proteins) and modulates the activity of downstream effectors, such as adenylate cyclase. GPR4 is mainly coupled to G(s) G proteins and mediates activation of adenylate cyclase activity. May also couple with G(q) and G(12)/G(13) G proteins. Acts as a key regulator of respiratory sensitivity to CO2/H(+) in brain retrotrapezoid nucleus neurons: acts by mediating detection of protons generated by the formation of carbonic acid in the blood, an important mechanism to impulse to breathe. Also acts as a regulator of acid secretion in the kidney collecting duct by maintaining acid-base homeostasis in the kidney. Acidosis-induced GPR4 activation increases paracellular gap formation and permeability of vascular endothelial cells, possibly through the G(12)/G(13)/Rho GTPase signaling pathway. The chain is G-protein coupled receptor 4 from Rattus norvegicus (Rat).